The chain runs to 197 residues: ATP-dependent Clp protease proteolytic subunit (197 aa).

The active-site Nucleophile is Ser101. Residue His126 is part of the active site.

This sequence belongs to the peptidase S14 family. Component of the chloroplastic Clp protease core complex.

It localises to the plastid. The protein localises to the chloroplast stroma. It carries out the reaction Hydrolysis of proteins to small peptides in the presence of ATP and magnesium. alpha-casein is the usual test substrate. In the absence of ATP, only oligopeptides shorter than five residues are hydrolyzed (such as succinyl-Leu-Tyr-|-NHMec, and Leu-Tyr-Leu-|-Tyr-Trp, in which cleavage of the -Tyr-|-Leu- and -Tyr-|-Trp bonds also occurs).. Functionally, cleaves peptides in various proteins in a process that requires ATP hydrolysis. Has a chymotrypsin-like activity. Plays a major role in the degradation of misfolded proteins. In Daucus carota (Wild carrot), this protein is ATP-dependent Clp protease proteolytic subunit.